The sequence spans 251 residues: Small ribosomal subunit protein uS2 (251 aa).

The protein belongs to the universal ribosomal protein uS2 family.

The polypeptide is Small ribosomal subunit protein uS2 (rpsB) (Arthrospira platensis (Spirulina platensis)).